A 183-amino-acid chain; its full sequence is Peptidyl-tRNA hydrolase (183 aa).

A tRNA-binding site is contributed by Tyr14. The Proton acceptor role is filled by His19. Residues Tyr60 and Asn62 each contribute to the tRNA site.

The protein belongs to the PTH family. In terms of assembly, monomer.

Its subcellular location is the cytoplasm. It carries out the reaction an N-acyl-L-alpha-aminoacyl-tRNA + H2O = an N-acyl-L-amino acid + a tRNA + H(+). Its function is as follows. Hydrolyzes ribosome-free peptidyl-tRNAs (with 1 or more amino acids incorporated), which drop off the ribosome during protein synthesis, or as a result of ribosome stalling. Functionally, catalyzes the release of premature peptidyl moieties from peptidyl-tRNA molecules trapped in stalled 50S ribosomal subunits, and thus maintains levels of free tRNAs and 50S ribosomes. This Mycoplasmoides gallisepticum (strain R(low / passage 15 / clone 2)) (Mycoplasma gallisepticum) protein is Peptidyl-tRNA hydrolase.